Here is a 462-residue protein sequence, read N- to C-terminus: tRNA modification GTPase MnmE (462 aa).

Positions 26, 91, and 130 each coordinate (6S)-5-formyl-5,6,7,8-tetrahydrofolate. The TrmE-type G domain maps to 228 to 382 (GLSTAKIGRP…IEERINDIFF (155 aa)). Asn238 lines the K(+) pocket. GTP-binding positions include 238–243 (NVGKSQ), 257–263 (TDIEGTT), and 282–285 (DTAG). Ser242 is a binding site for Mg(2+). K(+)-binding residues include Thr257, Ile259, and Thr262. Thr263 provides a ligand contact to Mg(2+). Position 462 (Lys462) interacts with (6S)-5-formyl-5,6,7,8-tetrahydrofolate.

It belongs to the TRAFAC class TrmE-Era-EngA-EngB-Septin-like GTPase superfamily. TrmE GTPase family. In terms of assembly, homodimer. Heterotetramer of two MnmE and two MnmG subunits. Requires K(+) as cofactor.

It localises to the cytoplasm. In terms of biological role, exhibits a very high intrinsic GTPase hydrolysis rate. Involved in the addition of a carboxymethylaminomethyl (cmnm) group at the wobble position (U34) of certain tRNAs, forming tRNA-cmnm(5)s(2)U34. This Streptococcus agalactiae protein is tRNA modification GTPase MnmE.